The following is a 196-amino-acid chain: Large ribosomal subunit protein uL18 (196 aa).

The protein belongs to the universal ribosomal protein uL18 family. As to quaternary structure, part of the 50S ribosomal subunit. Contacts the 5S and 23S rRNAs.

This is one of the proteins that bind and probably mediate the attachment of the 5S RNA into the large ribosomal subunit, where it forms part of the central protuberance. The protein is Large ribosomal subunit protein uL18 of Saccharolobus islandicus (strain Y.N.15.51 / Yellowstone #2) (Sulfolobus islandicus).